The sequence spans 907 residues: DNA ligase 4 (907 aa).

Glutamate 273, lysine 275, arginine 280, glutamate 333, phenylalanine 378, glutamate 438, lysine 443, lysine 460, and lysine 462 together coordinate ATP. Lysine 275 serves as the catalytic N6-AMP-lysine intermediate. Glutamate 333 contributes to the Mg(2+) binding site. Glutamate 438 provides a ligand contact to Mg(2+). BRCT domains are found at residues 655 to 754 (PVSN…ESDI) and 800 to 906 (VPLF…HYQC).

It belongs to the ATP-dependent DNA ligase family. Mg(2+) is required as a cofactor.

Its subcellular location is the nucleus. It catalyses the reaction ATP + (deoxyribonucleotide)n-3'-hydroxyl + 5'-phospho-(deoxyribonucleotide)m = (deoxyribonucleotide)n+m + AMP + diphosphate.. In terms of biological role, DNA ligase involved in DNA non-homologous end joining (NHEJ); required for double-strand break (DSB) repair. The chain is DNA ligase 4 (LIG4) from Kluyveromyces lactis (strain ATCC 8585 / CBS 2359 / DSM 70799 / NBRC 1267 / NRRL Y-1140 / WM37) (Yeast).